The chain runs to 141 residues: MSPKIRETLYYVGTLVPGILGIALIWGGIDAGAAANIGDIVAGALNLVGAAAPATAAVKVNQQRKDGTLTTSPVDQVTRGVEQVLAAKQNAEAEVERVKQALESAVNGAVPQLGPLASQILNGIQPAYSQPFDPHTQPWNR.

2 consecutive transmembrane segments (helical) span residues 9–29 (LYYV…WGGI) and 37–57 (IGDI…ATAA). The stretch at 74–108 (VDQVTRGVEQVLAAKQNAEAEVERVKQALESAVNG) forms a coiled coil.

The protein belongs to the Mycobacterium phage D29 holin family. Homomultimer. Self-associates to form a pore.

It localises to the host cell inner membrane. In terms of biological role, accumulates harmlessly in the cytoplasmic membrane until it reaches a critical concentration that triggers the formation of micron-scale pores (holes) causing host cell membrane disruption and endolysin escape into the periplasmic space. Determines the precise timing of host cell lysis. Participates with the endolysin protein in the sequential events which lead to the programmed host cell lysis releasing the mature viral particles from the host cell. The protein is Holin (11) of Mycobacterium (Mycobacteriophage D29).